The primary structure comprises 138 residues: Large ribosomal subunit protein uL16 (138 aa).

The span at 1–19 (MLIPRKVKHRKQHHPKKKG) shows a compositional bias: basic residues. The disordered stretch occupies residues 1 to 24 (MLIPRKVKHRKQHHPKKKGTASGG).

The protein belongs to the universal ribosomal protein uL16 family. Part of the 50S ribosomal subunit.

Binds 23S rRNA and is also seen to make contacts with the A and possibly P site tRNAs. The sequence is that of Large ribosomal subunit protein uL16 from Mycobacteroides abscessus (strain ATCC 19977 / DSM 44196 / CCUG 20993 / CIP 104536 / JCM 13569 / NCTC 13031 / TMC 1543 / L948) (Mycobacterium abscessus).